The following is a 203-amino-acid chain: Large ribosomal subunit protein bL25 (203 aa).

This sequence belongs to the bacterial ribosomal protein bL25 family. CTC subfamily. As to quaternary structure, part of the 50S ribosomal subunit; part of the 5S rRNA/L5/L18/L25 subcomplex. Contacts the 5S rRNA. Binds to the 5S rRNA independently of L5 and L18.

Functionally, this is one of the proteins that binds to the 5S RNA in the ribosome where it forms part of the central protuberance. The polypeptide is Large ribosomal subunit protein bL25 (Paraburkholderia phymatum (strain DSM 17167 / CIP 108236 / LMG 21445 / STM815) (Burkholderia phymatum)).